Consider the following 152-residue polypeptide: Small ribosomal subunit protein uS15 (152 aa).

Residues 1 to 19 show a composition bias toward basic residues; it reads MAKMHTRRKGRSRSTRPVR. Positions 1-21 are disordered; it reads MAKMHTRRKGRSRSTRPVRKT.

This sequence belongs to the universal ribosomal protein uS15 family. In terms of assembly, part of the 30S ribosomal subunit.

This is Small ribosomal subunit protein uS15 from Methanocella arvoryzae (strain DSM 22066 / NBRC 105507 / MRE50).